The sequence spans 495 residues: UDP-glycosyltransferase 73C13 (495 aa).

His-24 (proton acceptor) is an active-site residue. His-24 contacts an anthocyanidin. The active-site Charge relay is the Asp-129. UDP-alpha-D-glucose is bound by residues Ala-356, Gln-358, His-373, Trp-376, Asn-377, Ser-378, and Glu-381. Ala-396 serves as a coordination point for an anthocyanidin. UDP-alpha-D-glucose is bound by residues Asp-397 and Gln-398.

Belongs to the UDP-glycosyltransferase family.

It carries out the reaction oleanolate + UDP-alpha-D-glucose = oleanolate 3-O-beta-D-glucoside + UDP + H(+). Its function is as follows. Catalyzes the transfer of a glucose (Glc) moiety from UDP-Glc to the C-3 position of the oleanane sapogenins oleanolate and hederagenin, and to the C-28 carboxylic group of the lupane sapogenin betulinate. The monoglucosylated hederagenin 3-O-beta-D-glucoside is a feeding deterrent of the yellow-striped flea beetle (Phyllotreta nemorum). The sequence is that of UDP-glycosyltransferase 73C13 from Barbarea vulgaris (Yellow rocket).